A 182-amino-acid chain; its full sequence is Auxin-responsive protein IAA9 (182 aa).

Positions 1–41 are disordered; the sequence is MELELGLAPPNSGHLVVDELSSSSSSGGGSGSAPVSASSAG. Residues 3–7 carry the EAR-like (transcriptional repression) motif; the sequence is LELGL. Low complexity predominate over residues 32–41; sequence SAPVSASSAG. The PB1 domain maps to 92-182; that stretch reads ANYVKVKKEG…RSVKRLKILG (91 aa).

Belongs to the Aux/IAA family. In terms of assembly, homodimers and heterodimers. Expressed in etiolated shoots and flowers.

Its subcellular location is the nucleus. Functionally, aux/IAA proteins are short-lived transcriptional factors that function as repressors of early auxin response genes at low auxin concentrations. In Oryza sativa subsp. japonica (Rice), this protein is Auxin-responsive protein IAA9 (IAA9).